A 161-amino-acid polypeptide reads, in one-letter code: Allophycocyanin beta chain (161 aa).

Asparagine 71 carries the post-translational modification N4-methylasparagine. Cysteine 81 is a binding site for (2R,3E)-phycocyanobilin.

It belongs to the phycobiliprotein family. As to quaternary structure, heterodimer of an alpha and a beta chain. Contains one covalently linked phycocyanobilin chromophore.

It is found in the plastid. It localises to the cyanelle thylakoid membrane. Functionally, light-harvesting photosynthetic bile pigment-protein from the phycobiliprotein complex. Allophycocyanin has a maximum absorption at approximately 650 nanometers. The chain is Allophycocyanin beta chain (apcB) from Cyanophora paradoxa.